A 593-amino-acid polypeptide reads, in one-letter code: Aspartate--tRNA ligase (593 aa).

Glu-180 contacts L-aspartate. An aspartate region spans residues 204–207 (QIFK). L-aspartate is bound at residue Arg-226. ATP contacts are provided by residues 226 to 228 (RDE) and Gln-235. Residue His-453 coordinates L-aspartate. An ATP-binding site is contributed by Glu-487. Arg-494 contributes to the L-aspartate binding site. 539 to 542 (GLDR) is an ATP binding site.

The protein belongs to the class-II aminoacyl-tRNA synthetase family. Type 1 subfamily. As to quaternary structure, homodimer.

It localises to the cytoplasm. The catalysed reaction is tRNA(Asp) + L-aspartate + ATP = L-aspartyl-tRNA(Asp) + AMP + diphosphate. Functionally, catalyzes the attachment of L-aspartate to tRNA(Asp) in a two-step reaction: L-aspartate is first activated by ATP to form Asp-AMP and then transferred to the acceptor end of tRNA(Asp). This chain is Aspartate--tRNA ligase, found in Clostridium botulinum (strain Okra / Type B1).